A 738-amino-acid polypeptide reads, in one-letter code: Polyphosphate kinase (738 aa).

The segment at 1 to 48 (MIGNDRWVTEIETGPVTEARPDTNAREPGDRTPAAPPAATPAATTDQL) is disordered. A compositionally biased stretch (basic and acidic residues) spans 19-30 (ARPDTNAREPGD). Asn91 contacts ATP. 2 residues coordinate Mg(2+): Arg427 and Arg457. His487 functions as the Phosphohistidine intermediate in the catalytic mechanism. 3 residues coordinate ATP: Tyr520, Arg620, and His648.

The protein belongs to the polyphosphate kinase 1 (PPK1) family. Mg(2+) is required as a cofactor. An intermediate of this reaction is the autophosphorylated ppk in which a phosphate is covalently linked to a histidine residue through a N-P bond.

The catalysed reaction is [phosphate](n) + ATP = [phosphate](n+1) + ADP. Functionally, catalyzes the reversible transfer of the terminal phosphate of ATP to form a long-chain polyphosphate (polyP). The chain is Polyphosphate kinase from Mycobacterium marinum (strain ATCC BAA-535 / M).